Reading from the N-terminus, the 348-residue chain is MLIKQGDRLINTRNWSELVKPDQISRASESADTMYGKFVCEPLERGYGTTIGNAMRRVLLASLQGAAFVAVKISGVQHEFTTIPGVLEDVTDIVLNLKQVRLAMDTEEPQHLELHVNKSGEVKAGDIKCNQHVMVLNADQHLMTLTEDVELTFELEVRMGKGYVPADMHEGLSDEIGLIALDASFSPVRKVAYTVEQARVGQMTNYDKLILEVWTDGSISPEDAIAYSAKIIKDQISVFINFDERISEQENEGRSSASDVNENLFKGIDELELSVRATNCLKSANISLVGELVQKSEGEMLKTKNFGRKSLDEIRRVLGEMSLDFGMKVDGFEKKYQEWLKRKQQNEA.

An alpha N-terminal domain (alpha-NTD) region spans residues 1-243 (MLIKQGDRLI…DQISVFINFD (243 aa)). An alpha C-terminal domain (alpha-CTD) region spans residues 260-348 (VNENLFKGID…WLKRKQQNEA (89 aa)).

It belongs to the RNA polymerase alpha chain family. Homodimer. The RNAP catalytic core consists of 2 alpha, 1 beta, 1 beta' and 1 omega subunit. When a sigma factor is associated with the core the holoenzyme is formed, which can initiate transcription.

The catalysed reaction is RNA(n) + a ribonucleoside 5'-triphosphate = RNA(n+1) + diphosphate. Its function is as follows. DNA-dependent RNA polymerase catalyzes the transcription of DNA into RNA using the four ribonucleoside triphosphates as substrates. The protein is DNA-directed RNA polymerase subunit alpha of Oleidesulfovibrio alaskensis (strain ATCC BAA-1058 / DSM 17464 / G20) (Desulfovibrio alaskensis).